A 217-amino-acid chain; its full sequence is Probable transaldolase (217 aa).

The Schiff-base intermediate with substrate role is filled by K83.

The protein belongs to the transaldolase family. Type 3B subfamily.

The protein localises to the cytoplasm. It carries out the reaction D-sedoheptulose 7-phosphate + D-glyceraldehyde 3-phosphate = D-erythrose 4-phosphate + beta-D-fructose 6-phosphate. Its pathway is carbohydrate degradation; pentose phosphate pathway; D-glyceraldehyde 3-phosphate and beta-D-fructose 6-phosphate from D-ribose 5-phosphate and D-xylulose 5-phosphate (non-oxidative stage): step 2/3. Transaldolase is important for the balance of metabolites in the pentose-phosphate pathway. This chain is Probable transaldolase, found in Chelativorans sp. (strain BNC1).